The following is a 196-amino-acid chain: Protein LURP-one-related 8 (196 aa).

It belongs to the LOR family.

Functionally, might be related to the phospholipid scramblase and tubby-like superfamily of membrane tethered transcription factors. The sequence is that of Protein LURP-one-related 8 from Arabidopsis thaliana (Mouse-ear cress).